The sequence spans 444 residues: Chromosomal replication initiator protein DnaA (444 aa).

The interval 1–66 is domain I, interacts with DnaA modulators; it reads MKSEIIESLK…SKTLRELFGK (66 aa). Positions 66-100 are domain II; it reads KPMDFRIEHASAKTEEKLDSNEDEPLVKKRPLILT. The interval 101–317 is domain III, AAA+ region; it reads PLNPILTFEN…GALVKLIMYQ (217 aa). ATP contacts are provided by Gly144, Gly146, Lys147, and Thr148. The segment at 318-444 is domain IV, binds dsDNA; sequence QISGEKVDLQ…VTGQILDQSV (127 aa).

It belongs to the DnaA family. Oligomerizes as a right-handed, spiral filament on DNA at oriC.

The protein localises to the cytoplasm. In terms of biological role, plays an essential role in the initiation and regulation of chromosomal replication. ATP-DnaA binds to the origin of replication (oriC) to initiate formation of the DNA replication initiation complex once per cell cycle. Binds the DnaA box (a 9 base pair repeat at the origin) and separates the double-stranded (ds)DNA. Forms a right-handed helical filament on oriC DNA; dsDNA binds to the exterior of the filament while single-stranded (ss)DNA is stabiized in the filament's interior. The ATP-DnaA-oriC complex binds and stabilizes one strand of the AT-rich DNA unwinding element (DUE), permitting loading of DNA polymerase. After initiation quickly degrades to an ADP-DnaA complex that is not apt for DNA replication. Binds acidic phospholipids. This Pseudothermotoga lettingae (strain ATCC BAA-301 / DSM 14385 / NBRC 107922 / TMO) (Thermotoga lettingae) protein is Chromosomal replication initiator protein DnaA.